A 247-amino-acid chain; its full sequence is PABIR family member 2 (247 aa).

The segment at 1–23 (MAQEKMELDLEPDTSYGGTLRRS) is disordered. Ala2 is modified (N-acetylalanine). 5 positions are modified to phosphoserine: Ser25, Ser33, Ser50, Ser58, and Leu63. A disordered region spans residues 82 to 104 (ISQSWDESLSLSDSDFDKPEKLY). Positions 83–94 (SQSWDESLSLSD) are enriched in low complexity. Residue Thr112 is modified to Phosphothreonine. Phosphoserine is present on residues Ser115 and Ser119. Arg122 carries the post-translational modification Omega-N-methylarginine. Disordered regions lie at residues 129 to 152 (VSSS…SQSP), 158 to 177 (PSVL…SQPK), and 202 to 230 (DILD…SPVA). Residues Ser137 and Ser141 each carry the phosphoserine modification. Basic and acidic residues predominate over residues 166-176 (RKGEMETESQP). Positions 202–216 (DILDGSSSSSGLSSD) are enriched in low complexity.

It belongs to the FAM122 family. Isoform 3 and isoform 4 are phosphorylated on Ser-62 and Ser-64.

This chain is PABIR family member 2, found in Homo sapiens (Human).